Consider the following 360-residue polypeptide: MPLSRLLINNFRNLQAIDLELSPDFNFIVGHNGSGKTSLLEAIFYLGHGRSFKSHISNRIIHHHAENFVLHSKIDETQHQWSVGLQKNRAGDTLLKINGEDGKKIADLAHLLPMQVITPEGLTLLNGGPSYRRAFLDWGLFHQHLEFYSYWANLKRLLKQRNAALPQVKSYSELKAWDIELVRLAHLVTKMRTEYAEALRPEIEKTCRFFLPELPIRVSFHQGWENGADYADVLRQGFERDQNIGYTMVGPQKADFRFKANGLPVEDVLSRGQLKLLMCALRLAQGEYLVTQKKRQCLFLIDDFASELDPMKRELLAHRLRETGSQVFVTAITAEQLNQMHWQEYAQDKLFHLKEGKLKT.

ATP is bound at residue 30–37; sequence GHNGSGKT.

Belongs to the RecF family.

It is found in the cytoplasm. The RecF protein is involved in DNA metabolism; it is required for DNA replication and normal SOS inducibility. RecF binds preferentially to single-stranded, linear DNA. It also seems to bind ATP. The protein is DNA replication and repair protein RecF of Haemophilus ducreyi (strain 35000HP / ATCC 700724).